A 555-amino-acid chain; its full sequence is Glutamine--tRNA ligase (555 aa).

The 'HIGH' region motif lies at 34–44; the sequence is PEPNGYLHIGH. ATP-binding positions include 35-37 and 41-47; these read EPN and HIGHAKS. Asp67 and Tyr212 together coordinate L-glutamine. ATP is bound by residues Thr231, 261-262, and 269-271; these read RL and MSK. The short motif at 268-272 is the 'KMSKS' region element; it reads VMSKR.

Belongs to the class-I aminoacyl-tRNA synthetase family. As to quaternary structure, monomer.

It is found in the cytoplasm. The enzyme catalyses tRNA(Gln) + L-glutamine + ATP = L-glutaminyl-tRNA(Gln) + AMP + diphosphate. The chain is Glutamine--tRNA ligase from Proteus mirabilis (strain HI4320).